Here is a 204-residue protein sequence, read N- to C-terminus: Thiamine-phosphate synthase (204 aa).

4-amino-2-methyl-5-(diphosphooxymethyl)pyrimidine is bound by residues 35–39 (QVREK) and Asn67. 2 residues coordinate Mg(2+): Asp68 and Asp87. Ser106 contacts 4-amino-2-methyl-5-(diphosphooxymethyl)pyrimidine. 132-134 (TPT) lines the 2-[(2R,5Z)-2-carboxy-4-methylthiazol-5(2H)-ylidene]ethyl phosphate pocket. Lys135 is a binding site for 4-amino-2-methyl-5-(diphosphooxymethyl)pyrimidine. 2-[(2R,5Z)-2-carboxy-4-methylthiazol-5(2H)-ylidene]ethyl phosphate contacts are provided by residues Gly163 and 183-184 (VS).

This sequence belongs to the thiamine-phosphate synthase family. Requires Mg(2+) as cofactor.

It carries out the reaction 2-[(2R,5Z)-2-carboxy-4-methylthiazol-5(2H)-ylidene]ethyl phosphate + 4-amino-2-methyl-5-(diphosphooxymethyl)pyrimidine + 2 H(+) = thiamine phosphate + CO2 + diphosphate. It catalyses the reaction 2-(2-carboxy-4-methylthiazol-5-yl)ethyl phosphate + 4-amino-2-methyl-5-(diphosphooxymethyl)pyrimidine + 2 H(+) = thiamine phosphate + CO2 + diphosphate. The catalysed reaction is 4-methyl-5-(2-phosphooxyethyl)-thiazole + 4-amino-2-methyl-5-(diphosphooxymethyl)pyrimidine + H(+) = thiamine phosphate + diphosphate. The protein operates within cofactor biosynthesis; thiamine diphosphate biosynthesis; thiamine phosphate from 4-amino-2-methyl-5-diphosphomethylpyrimidine and 4-methyl-5-(2-phosphoethyl)-thiazole: step 1/1. Its function is as follows. Condenses 4-methyl-5-(beta-hydroxyethyl)thiazole monophosphate (THZ-P) and 2-methyl-4-amino-5-hydroxymethyl pyrimidine pyrophosphate (HMP-PP) to form thiamine monophosphate (TMP). The protein is Thiamine-phosphate synthase of Vibrio parahaemolyticus serotype O3:K6 (strain RIMD 2210633).